A 382-amino-acid chain; its full sequence is Lipid-A-disaccharide synthase (382 aa).

The protein belongs to the LpxB family.

It carries out the reaction 2-N,3-O-bis[(3R)-3-hydroxytetradecanoyl]-alpha-D-glucosaminyl 1-phosphate + UDP-2-N,3-O-bis[(3R)-3-hydroxytetradecanoyl]-alpha-D-glucosamine = lipid A disaccharide (E. coli) + UDP + H(+). It catalyses the reaction a lipid X + a UDP-2-N,3-O-bis[(3R)-3-hydroxyacyl]-alpha-D-glucosamine = a lipid A disaccharide + UDP + H(+). It functions in the pathway glycolipid biosynthesis; lipid IV(A) biosynthesis; lipid IV(A) from (3R)-3-hydroxytetradecanoyl-[acyl-carrier-protein] and UDP-N-acetyl-alpha-D-glucosamine: step 5/6. Functionally, condensation of UDP-2,3-diacylglucosamine and 2,3-diacylglucosamine-1-phosphate to form lipid A disaccharide, a precursor of lipid A, a phosphorylated glycolipid that anchors the lipopolysaccharide to the outer membrane of the cell. This is Lipid-A-disaccharide synthase from Escherichia coli O7:K1 (strain IAI39 / ExPEC).